A 530-amino-acid polypeptide reads, in one-letter code: 6-phosphofructo-2-kinase/fructose-2,6-bisphosphatase 2 (530 aa).

The segment covering 1–15 (MSGASSSEQNNNSYE) has biased composition (polar residues). The interval 1-21 (MSGASSSEQNNNSYETKPPNL) is disordered. Serine 2 is subject to N-acetylserine. A 6-phosphofructo-2-kinase region spans residues 2-248 (SGASSSEQNN…VYYLMNIHVQ (247 aa)). Serine 29 is modified (phosphoserine; by PKA). 45–53 (GLPARGKTY) serves as a coordination point for ATP. Residues arginine 78 and arginine 102 each coordinate beta-D-fructose 6-phosphate. Residue aspartate 128 is part of the active site. Positions 130 and 136 each coordinate beta-D-fructose 6-phosphate. The active site involves cysteine 158. 167 to 172 (NILEVK) serves as a coordination point for ATP. Beta-D-fructose 6-phosphate-binding residues include lysine 172, arginine 193, and tyrosine 197. The tract at residues 249–530 (PRTIYLCRHG…PPALASCPCH (282 aa)) is fructose-2,6-bisphosphatase. Arginine 256 contributes to the beta-D-fructose 2,6-bisphosphate binding site. Catalysis depends on histidine 257, which acts as the Tele-phosphohistidine intermediate. Glycine 269 is a beta-D-fructose 2,6-bisphosphate binding site. Glutamate 326 serves as the catalytic Proton donor/acceptor. 6 residues coordinate beta-D-fructose 2,6-bisphosphate: tyrosine 337, arginine 351, lysine 355, tyrosine 366, glutamine 392, and arginine 396. 348 to 351 (FALR) provides a ligand contact to ATP. Residues 392–396 (QAVMR) and tyrosine 428 each bind ATP. Residues 446-512 (RDKPTNNFPK…GPTSRRPKSH (67 aa)) are disordered. Positions 450–476 (TNNFPKNQTPVRMRRNSFTPLSSSNTI) are enriched in polar residues. Serine 466 is modified (phosphoserine; by AMPK and PKA). The residue at position 468 (threonine 468) is a Phosphothreonine. Threonine 475 is subject to Phosphothreonine; by PKC. Serine 483 and serine 493 each carry phosphoserine.

In the C-terminal section; belongs to the phosphoglycerate mutase family. As to quaternary structure, homodimer. Forms a heterodimer with PFKFB3. Post-translationally, phosphorylation by AMPK stimulates activity.

The catalysed reaction is beta-D-fructose 2,6-bisphosphate + H2O = beta-D-fructose 6-phosphate + phosphate. It carries out the reaction beta-D-fructose 6-phosphate + ATP = beta-D-fructose 2,6-bisphosphate + ADP + H(+). Its activity is regulated as follows. Phosphorylation results in the activation of the kinase activity. Its function is as follows. Synthesis and degradation of fructose 2,6-bisphosphate. In Pongo abelii (Sumatran orangutan), this protein is 6-phosphofructo-2-kinase/fructose-2,6-bisphosphatase 2 (PFKFB2).